The primary structure comprises 459 residues: Tryptophan synthase beta chain (459 aa).

Residue Lys121 is modified to N6-(pyridoxal phosphate)lysine.

Belongs to the TrpB family. Tetramer of two alpha and two beta chains. The cofactor is pyridoxal 5'-phosphate.

It catalyses the reaction (1S,2R)-1-C-(indol-3-yl)glycerol 3-phosphate + L-serine = D-glyceraldehyde 3-phosphate + L-tryptophan + H2O. It participates in amino-acid biosynthesis; L-tryptophan biosynthesis; L-tryptophan from chorismate: step 5/5. In terms of biological role, the beta subunit is responsible for the synthesis of L-tryptophan from indole and L-serine. This Pyrococcus horikoshii (strain ATCC 700860 / DSM 12428 / JCM 9974 / NBRC 100139 / OT-3) protein is Tryptophan synthase beta chain (trpB).